Reading from the N-terminus, the 1016-residue chain is Vacuolar membrane protease (1016 aa).

Residues 1-36 (MAETESGTGNSPSHRLSETSNASGNRSHQQSKQIAS) form a disordered region. The Cytoplasmic segment spans residues 1–57 (MAETESGTGNSPSHRLSETSNASGNRSHQQSKQIASYKSSKPNVFIRFIRAIFGYRK). Residues 58–78 (TSVTLFVFITIIATLILVELS) traverse the membrane as a helical segment. Topologically, residues 79–408 (NSLDFSVKLP…FVIPASQLVL (330 aa)) are vacuolar. Asn147 and Asn177 each carry an N-linked (GlcNAc...) asparagine glycan. Zn(2+)-binding residues include His191 and Asp203. Glu238 functions as the Proton acceptor in the catalytic mechanism. Residues Glu239, Glu264, and His337 each coordinate Zn(2+). A helical membrane pass occupies residues 409 to 429 (INVTCLAVIPLISLPLLVIIF). The Cytoplasmic segment spans residues 430–438 (NYKKNWHIG). Residues 439 to 459 (FINAIKFPVSLVLSICILNII) traverse the membrane as a helical segment. Residues 460-481 (THNVIASINEFLPNSSYDSIVS) lie on the Vacuolar side of the membrane. Asn473 carries N-linked (GlcNAc...) asparagine glycosylation. The helical transmembrane segment at 482–502 (TLYSLFLLLNYLFLNGINFIF) threads the bilayer. Residues 503–511 (KGYKGLYHD) lie on the Cytoplasmic side of the membrane. The helical transmembrane segment at 512–532 (EKLILIIQTSFIYWVLLIVST) threads the bilayer. Residues 533–547 (NKLSKNKIGNDHTGE) lie on the Vacuolar side of the membrane. A helical transmembrane segment spans residues 548–568 (FPLIMLFLLQSIGALFGLFSW). At 569 to 646 (SFKKTTPDEL…SFSYDWSIQY (78 aa)) the chain is on the cytoplasmic side. The tract at residues 598 to 622 (YGSNEAELESGEPISSNSSVSLNSS) is disordered. A compositionally biased stretch (low complexity) spans 612–622 (SSNSSVSLNSS). A helical membrane pass occupies residues 647-667 (VVIVPLSSLIVYNTGSLLLSG). Topologically, residues 668–681 (LNKSIQESLNAEKL) are vacuolar. Asn669 carries an N-linked (GlcNAc...) asparagine glycan. Residues 682-702 (IFDLIQLVAVTLAIPFLPFIF) traverse the membrane as a helical segment. The Cytoplasmic segment spans residues 703–706 (KINR). The chain crosses the membrane as a helical span at residues 707–727 (LLVTALVLVFCSGFISIFLKS). The Vacuolar segment spans residues 728–1016 (PFDQLNPLKL…LVSVSKYVEI (289 aa)). Asn778, Asn821, Asn850, Asn875, and Asn977 each carry an N-linked (GlcNAc...) asparagine glycan.

Belongs to the peptidase M28 family. It depends on Zn(2+) as a cofactor.

It is found in the vacuole membrane. Functionally, may be involved in vacuolar sorting and osmoregulation. The chain is Vacuolar membrane protease from Debaryomyces hansenii (strain ATCC 36239 / CBS 767 / BCRC 21394 / JCM 1990 / NBRC 0083 / IGC 2968) (Yeast).